Here is a 147-residue protein sequence, read N- to C-terminus: Basic phospholipase A2 beta-bungarotoxin A4 chain (147 aa).

The signal sequence occupies residues 1–19; it reads MNPAHLLVLSAVCVSLLGA. Residues 20–27 constitute a propeptide that is removed on maturation; sequence ANIPPHPL. Cystine bridges form between cysteine 54–cysteine 146, cysteine 56–cysteine 72, cysteine 71–cysteine 127, cysteine 78–cysteine 120, cysteine 88–cysteine 113, and cysteine 106–cysteine 118. Ca(2+) contacts are provided by tyrosine 55, glycine 57, and glycine 59. Histidine 75 is an active-site residue. Residue aspartate 76 coordinates Ca(2+). The active site involves aspartate 121.

The protein belongs to the phospholipase A2 family. Group I subfamily. D49 sub-subfamily. In terms of assembly, heterodimer; disulfide-linked. The A chain has phospholipase A2 activity and the B chain shows homology with the basic protease inhibitors. The cofactor is Ca(2+). In terms of tissue distribution, expressed by the venom gland.

The protein localises to the secreted. It catalyses the reaction a 1,2-diacyl-sn-glycero-3-phosphocholine + H2O = a 1-acyl-sn-glycero-3-phosphocholine + a fatty acid + H(+). Its function is as follows. Snake venom phospholipase A2 (PLA2) that shows presynaptic neurotoxicity. The A chain has phospholipase activity. PLA2 catalyzes the calcium-dependent hydrolysis of the 2-acyl groups in 3-sn-phosphoglycerides. In Bungarus candidus (Malayan krait), this protein is Basic phospholipase A2 beta-bungarotoxin A4 chain.